A 333-amino-acid chain; its full sequence is Protein translocase subunit SecF (333 aa).

Helical transmembrane passes span 27–47 (AIVM…NFGI), 152–172 (VWTA…YIWV), 180–200 (LGAV…FAVL), 207–227 (TTVA…VVVF), 253–275 (TLSR…LIWG), and 285–307 (AMVW…IVLF).

This sequence belongs to the SecD/SecF family. SecF subfamily. Forms a complex with SecD. Part of the essential Sec protein translocation apparatus which comprises SecA, SecYEG and auxiliary proteins SecDF-YajC and YidC.

Its subcellular location is the cell inner membrane. In terms of biological role, part of the Sec protein translocase complex. Interacts with the SecYEG preprotein conducting channel. SecDF uses the proton motive force (PMF) to complete protein translocation after the ATP-dependent function of SecA. In Rhodobacter capsulatus (strain ATCC BAA-309 / NBRC 16581 / SB1003), this protein is Protein translocase subunit SecF.